Reading from the N-terminus, the 481-residue chain is MSYIKKLRARLDSGEISAVELTKEYLAKIKEQDKRINSVITLCEAEALKEAEDADAIISAGKQGLLTGIPILHKDLFCTKGIRTTAASKMLDNFVAPYDSTVTKNCKDQGMVTLGKLNMDEFAMGSTNEYSYYGAVSNPWDLERVPGGSSGGSAAAVAAGFAPISTGSDTGGSVRQPASFCGLTAMKPSYGSTSRFGMVAFASSFDQAGIFGHYAEDVALMLDAIAGECEFDSTCVGVKQNHFTQDLEKDISGKVIGVDESLIKDLPAQIQEAVSKTLDNFKKLGAEIKSVKVPDLKEALSTYYIITPAEAAANLARYDGIRYGYRNPEARDLDELYRKSRTDGFGAEVKRRIMIGNYVLASSQYDSYYNKSQQLRKVMTDQINQIFTQVDAIFMPASPSEAFKKGDKLDPVSAYLSDIYTIPANISGLPAIAFPIGFANNLPVGGQLMAKAFNDNILTQMVVQYQKHYGIEEFILQQARI.

Catalysis depends on charge relay system residues K74 and S149. S173 serves as the catalytic Acyl-ester intermediate.

Belongs to the amidase family. GatA subfamily. As to quaternary structure, heterotrimer of A, B and C subunits.

It carries out the reaction L-glutamyl-tRNA(Gln) + L-glutamine + ATP + H2O = L-glutaminyl-tRNA(Gln) + L-glutamate + ADP + phosphate + H(+). Allows the formation of correctly charged Gln-tRNA(Gln) through the transamidation of misacylated Glu-tRNA(Gln) in organisms which lack glutaminyl-tRNA synthetase. The reaction takes place in the presence of glutamine and ATP through an activated gamma-phospho-Glu-tRNA(Gln). The chain is Glutamyl-tRNA(Gln) amidotransferase subunit A from Francisella tularensis subsp. mediasiatica (strain FSC147).